A 509-amino-acid polypeptide reads, in one-letter code: Coiled-coil domain-containing protein 181 (509 aa).

Residues 58 to 82 show a composition bias toward basic and acidic residues; it reads VIEHTKQHSDPDKSLQDEVSPRKND. 3 disordered regions span residues 58-120, 241-332, and 345-367; these read VIEH…EEED, PINN…VTST, and QLEQKREKLKREEERRKIEEEKE. 2 stretches are compositionally biased toward polar residues: residues 243–266 and 300–332; these read NNANTTENDPQQLLPRSSNSSVSG and TCPSSAVISDQSKGNGNSNHRAQSAHISPVTST. A coiled-coil region spans residues 335-375; that stretch reads LSPRQKELQKQLEQKREKLKREEERRKIEEEKEKKRENDIV.

This sequence belongs to the CCDC181 family. As to quaternary structure, homodimer. Interacts with HOOK1. Interacts with HOOK2. Interacts with HOOK3.

The protein resides in the cytoplasm. It localises to the cytoskeleton. The protein localises to the cell projection. Its subcellular location is the cilium. It is found in the flagellum. Its function is as follows. Microtubule-binding protein that localizes to the microtubular manchette of elongating spermatids. The sequence is that of Coiled-coil domain-containing protein 181 from Pongo abelii (Sumatran orangutan).